Consider the following 91-residue polypeptide: Small ribosomal subunit protein bS20 (91 aa).

A compositionally biased stretch (basic and acidic residues) spans 1-18 (MPLHKSAEKRLRQSDRKN). Residues 1 to 25 (MPLHKSAEKRLRQSDRKNARNRARK) are disordered.

This sequence belongs to the bacterial ribosomal protein bS20 family.

Its function is as follows. Binds directly to 16S ribosomal RNA. The sequence is that of Small ribosomal subunit protein bS20 from Chlorobium phaeovibrioides (strain DSM 265 / 1930) (Prosthecochloris vibrioformis (strain DSM 265)).